The sequence spans 366 residues: Ferredoxin--NADP reductase, leaf isozyme 2, chloroplastic (366 aa).

The transit peptide at 1–48 (MAAVNTVSSLPCSKAGAAVAGGAPRPSTCSVFYPPRCWSKRSSGNGVR) directs the protein to the chloroplast. The region spanning 87–209 (KEPYTGRCLL…TGPVGKEMLM (123 aa)) is the FAD-binding FR-type domain. FAD is bound by residues 145 to 148 (RLYS), 166 to 168 (CVK), Tyr172, and 183 to 185 (VCS). 2 residues coordinate NADP(+): Ser148 and Lys168. An intrachain disulfide couples Cys184 to Cys189. At Ser185 the chain carries Phosphoserine. Phosphothreonine is present on Thr216. An FAD-binding site is contributed by Thr224. Residues Thr224, 256–257 (VP), 286–287 (SR), Lys296, 325–326 (GL), and Glu364 contribute to the NADP(+) site.

It belongs to the ferredoxin--NADP reductase type 1 family. Heterodimer with LFNR1. Component of high molecular weight thylakoid LFNRs-containing protein complexes containing LIR1, LFNR1, LFNR2, TIC62 and TROL proteins. Interacts directly with LFNR1 and LFNR2; LIR1 increases the affinity of LFNR1 and LFNR2 for TIC62 and subsequent thylakoid relocalization. FAD serves as cofactor. May form interchain disulfide bonds with LIR1.

It is found in the plastid. The protein resides in the chloroplast stroma. It localises to the chloroplast thylakoid membrane. It catalyses the reaction 2 reduced [2Fe-2S]-[ferredoxin] + NADP(+) + H(+) = 2 oxidized [2Fe-2S]-[ferredoxin] + NADPH. The protein operates within energy metabolism; photosynthesis. Plays a key role in regulating the relative amounts of cyclic and non-cyclic electron flow to meet the demands of the plant for ATP and reducing power. The chain is Ferredoxin--NADP reductase, leaf isozyme 2, chloroplastic from Oryza sativa subsp. indica (Rice).